A 178-amino-acid polypeptide reads, in one-letter code: MTSLRPFTCDDLFRFNNINLDPLTETYGIPFYLQYLAHWPEYFIVAEAPGGELMGYIMGKAEGSVAREEWHGHVTALSVAPEFRRLGLAAKLMELLEEISERKGGFFVDLFVRVSNQVAVNMYKQLGYSVYRTVIEYYSASNGEPDEDAYDMRKALSRDTEKKSIVPLPHPVRPEDIE.

An N-acetyltransferase domain is found at 2–157 (TSLRPFTCDD…DAYDMRKALS (156 aa)). The tract at residues 159–178 (DTEKKSIVPLPHPVRPEDIE) is disordered.

This sequence belongs to the acetyltransferase family. ARD1 subfamily. Component of the N-terminal acetyltransferase B (NatB) complex which is composed of naa20 and naa25.

It is found in the cytoplasm. Its subcellular location is the nucleus. The catalysed reaction is N-terminal L-methionyl-L-asparaginyl-[protein] + acetyl-CoA = N-terminal N(alpha)-acetyl-L-methionyl-L-asparaginyl-[protein] + CoA + H(+). The enzyme catalyses N-terminal L-methionyl-L-glutaminyl-[protein] + acetyl-CoA = N-terminal N(alpha)-acetyl-L-methionyl-L-glutaminyl-[protein] + CoA + H(+). It carries out the reaction N-terminal L-methionyl-L-aspartyl-[protein] + acetyl-CoA = N-terminal N(alpha)-acetyl-L-methionyl-L-aspartyl-[protein] + CoA + H(+). It catalyses the reaction N-terminal L-methionyl-L-glutamyl-[protein] + acetyl-CoA = N-terminal N(alpha)-acetyl-L-methionyl-L-glutamyl-[protein] + CoA + H(+). Its function is as follows. Catalytic subunit of the NatB complex which catalyzes acetylation of the N-terminal methionine residues of peptides beginning with Met-Asp, Met-Glu, Met-Asn and Met-Gln. Proteins with cell cycle functions are overrepresented in the pool of NatB substrates. Required for maintaining the structure and function of actomyosin fibers and for proper cellular migration. In Xenopus tropicalis (Western clawed frog), this protein is N-alpha-acetyltransferase 20 (naa20).